A 255-amino-acid chain; its full sequence is Methionine aminopeptidase (255 aa).

His76 is a binding site for substrate. The a divalent metal cation site is built by Asp93, Asp104, and His167. His174 contacts substrate. 2 residues coordinate a divalent metal cation: Glu201 and Glu232.

The protein belongs to the peptidase M24A family. Methionine aminopeptidase type 1 subfamily. In terms of assembly, monomer. Co(2+) is required as a cofactor. Requires Zn(2+) as cofactor. It depends on Mn(2+) as a cofactor. The cofactor is Fe(2+).

The catalysed reaction is Release of N-terminal amino acids, preferentially methionine, from peptides and arylamides.. Removes the N-terminal methionine from nascent proteins. The N-terminal methionine is often cleaved when the second residue in the primary sequence is small and uncharged (Met-Ala-, Cys, Gly, Pro, Ser, Thr, or Val). Requires deformylation of the N(alpha)-formylated initiator methionine before it can be hydrolyzed. The sequence is that of Methionine aminopeptidase from Treponema pallidum (strain Nichols).